The following is a 384-amino-acid chain: Putative glutamate--cysteine ligase 2-1 (384 aa).

It belongs to the glutamate--cysteine ligase type 2 family. YbdK subfamily.

The enzyme catalyses L-cysteine + L-glutamate + ATP = gamma-L-glutamyl-L-cysteine + ADP + phosphate + H(+). In terms of biological role, ATP-dependent carboxylate-amine ligase which exhibits weak glutamate--cysteine ligase activity. This chain is Putative glutamate--cysteine ligase 2-1, found in Paenarthrobacter aurescens (strain TC1).